The sequence spans 267 residues: 4-hydroxy-2-oxo-heptane-1,7-dioate aldolase (267 aa).

The Proton acceptor role is filled by H45. Residue Q147 coordinates substrate. An a divalent metal cation-binding site is contributed by E149. A174 and D175 together coordinate substrate. Residue D175 coordinates a divalent metal cation.

This sequence belongs to the HpcH/HpaI aldolase family. In terms of assembly, homohexamer; trimer of dimers. A divalent metal cation serves as cofactor.

It catalyses the reaction 4-hydroxy-2-oxoheptanedioate = succinate semialdehyde + pyruvate. The protein operates within aromatic compound metabolism; 4-hydroxyphenylacetate degradation; pyruvate and succinate semialdehyde from 4-hydroxyphenylacetate: step 7/7. Its function is as follows. Catalyzes the reversible retro-aldol cleavage of 4-hydroxy-2-ketoheptane-1,7-dioate (HKHD) to pyruvate and succinic semialdehyde. This Shigella flexneri protein is 4-hydroxy-2-oxo-heptane-1,7-dioate aldolase.